The sequence spans 208 residues: Large ribosomal subunit protein uL4 (208 aa).

The segment at 45 to 77 (RQGTHKAKERAEIKGSTRKIKKQKGTGTARAGS) is disordered.

It belongs to the universal ribosomal protein uL4 family. Part of the 50S ribosomal subunit.

In terms of biological role, one of the primary rRNA binding proteins, this protein initially binds near the 5'-end of the 23S rRNA. It is important during the early stages of 50S assembly. It makes multiple contacts with different domains of the 23S rRNA in the assembled 50S subunit and ribosome. Its function is as follows. Forms part of the polypeptide exit tunnel. The protein is Large ribosomal subunit protein uL4 of Christiangramia forsetii (strain DSM 17595 / CGMCC 1.15422 / KT0803) (Gramella forsetii).